The sequence spans 324 residues: Beta-ketoacyl-[acyl-carrier-protein] synthase III (324 aa).

Catalysis depends on residues Cys112 and His249. An ACP-binding region spans residues 250–254 (QANRR). Asn279 is an active-site residue.

It belongs to the thiolase-like superfamily. FabH family. In terms of assembly, homodimer.

It localises to the cytoplasm. It carries out the reaction malonyl-[ACP] + acetyl-CoA + H(+) = 3-oxobutanoyl-[ACP] + CO2 + CoA. It functions in the pathway lipid metabolism; fatty acid biosynthesis. In terms of biological role, catalyzes the condensation reaction of fatty acid synthesis by the addition to an acyl acceptor of two carbons from malonyl-ACP. Catalyzes the first condensation reaction which initiates fatty acid synthesis and may therefore play a role in governing the total rate of fatty acid production. Possesses both acetoacetyl-ACP synthase and acetyl transacylase activities. Its substrate specificity determines the biosynthesis of branched-chain and/or straight-chain of fatty acids. In Streptococcus pyogenes serotype M49 (strain NZ131), this protein is Beta-ketoacyl-[acyl-carrier-protein] synthase III.